A 318-amino-acid chain; its full sequence is Ribosomal RNA small subunit methyltransferase A (318 aa).

Positions 40, 42, 67, 88, 118, and 137 each coordinate S-adenosyl-L-methionine. The segment covering 295–305 has biased composition (basic and acidic residues); the sequence is SADRGGTDREG. Residues 295 to 318 are disordered; sequence SADRGGTDREGTSPPTAGQGAPAR.

This sequence belongs to the class I-like SAM-binding methyltransferase superfamily. rRNA adenine N(6)-methyltransferase family. RsmA subfamily.

It localises to the cytoplasm. It catalyses the reaction adenosine(1518)/adenosine(1519) in 16S rRNA + 4 S-adenosyl-L-methionine = N(6)-dimethyladenosine(1518)/N(6)-dimethyladenosine(1519) in 16S rRNA + 4 S-adenosyl-L-homocysteine + 4 H(+). In terms of biological role, specifically dimethylates two adjacent adenosines (A1518 and A1519) in the loop of a conserved hairpin near the 3'-end of 16S rRNA in the 30S particle. May play a critical role in biogenesis of 30S subunits. The polypeptide is Ribosomal RNA small subunit methyltransferase A (Mycolicibacterium paratuberculosis (strain ATCC BAA-968 / K-10) (Mycobacterium paratuberculosis)).